A 589-amino-acid polypeptide reads, in one-letter code: Coronatine-insensitive protein homolog 2 (589 aa).

An F-box domain is found at 18-59; it reads IPDVALGLVMGFVEDPWDRDAISLVCRHWCRVDALSRKHVTV. 4 residues coordinate jasmonate: R87, R352, R414, and R501.

As to quaternary structure, interacts with TIFY9/JAZ5, TIFY11C/JAZ11 and TIFY11D/JAZ12 in a coronatine-dependent manner.

Functionally, involved in jasmonate (JA) signaling. Required for jasmonate signaling in plant defense responses. Component of SCF(COI1) E3 ubiquitin ligase complexes, which may mediate the ubiquitination and subsequent proteasomal degradation of target proteins, including TIFY/JAZ family. In Oryza sativa subsp. indica (Rice), this protein is Coronatine-insensitive protein homolog 2.